The chain runs to 483 residues: V-type proton ATPase subunit H (483 aa).

Serine 483 is modified (phosphoserine).

The protein belongs to the V-ATPase H subunit family. As to quaternary structure, V-ATPase is a heteromultimeric enzyme made up of two complexes: the ATP-hydrolytic V1 complex and the proton translocation V0 complex. The V1 complex consists of three catalytic AB heterodimers that form a heterohexamer, three peripheral stalks each consisting of EG heterodimers, one central rotor including subunits D and F, and the regulatory subunits C and H. The proton translocation complex V0 consists of the proton transport subunit a, a ring of proteolipid subunits c9c'', rotary subunit d, subunits e and f, and the accessory subunits ATP6AP1/Ac45 and ATP6AP2/PRR. Interacts with AP2M1. Interacts with TM9SF4 in colon cancer cells. (Microbial infection) Interacts with HIV-1 Nef protein. In terms of assembly, (Microbial infection) Interacts with M.tuberculosis PtpA, which blocks V-ATPase trafficking and phagosome acidification. In terms of tissue distribution, widely expressed.

It is found in the cytoplasmic vesicle. Its subcellular location is the clathrin-coated vesicle membrane. Subunit of the V1 complex of vacuolar(H+)-ATPase (V-ATPase), a multisubunit enzyme composed of a peripheral complex (V1) that hydrolyzes ATP and a membrane integral complex (V0) that translocates protons. V-ATPase is responsible for acidifying and maintaining the pH of intracellular compartments and in some cell types, is targeted to the plasma membrane, where it is responsible for acidifying the extracellular environment. Subunit H is essential for V-ATPase activity, but not for the assembly of the complex. Involved in the endocytosis mediated by clathrin-coated pits, required for the formation of endosomes. This Homo sapiens (Human) protein is V-type proton ATPase subunit H (ATP6V1H).